The sequence spans 605 residues: Isocitrate dehydrogenase kinase/phosphatase (605 aa).

Residues 327–333 and lysine 348 contribute to the ATP site; that span reads APGIKGL. Aspartate 383 is an active-site residue.

Belongs to the AceK family.

The protein resides in the cytoplasm. The enzyme catalyses L-seryl-[isocitrate dehydrogenase] + ATP = O-phospho-L-seryl-[isocitrate dehydrogenase] + ADP + H(+). Bifunctional enzyme which can phosphorylate or dephosphorylate isocitrate dehydrogenase (IDH) on a specific serine residue. This is a regulatory mechanism which enables bacteria to bypass the Krebs cycle via the glyoxylate shunt in response to the source of carbon. When bacteria are grown on glucose, IDH is fully active and unphosphorylated, but when grown on acetate or ethanol, the activity of IDH declines drastically concomitant with its phosphorylation. In Burkholderia multivorans (strain ATCC 17616 / 249), this protein is Isocitrate dehydrogenase kinase/phosphatase.